The primary structure comprises 367 residues: Glutamate 5-kinase (367 aa).

Lysine 10 contacts ATP. Positions 50, 137, and 149 each coordinate substrate. Residues threonine 169–aspartate 170 and threonine 211–lysine 217 contribute to the ATP site. Residues alanine 275 to glutamate 353 form the PUA domain.

Belongs to the glutamate 5-kinase family.

Its subcellular location is the cytoplasm. The catalysed reaction is L-glutamate + ATP = L-glutamyl 5-phosphate + ADP. The protein operates within amino-acid biosynthesis; L-proline biosynthesis; L-glutamate 5-semialdehyde from L-glutamate: step 1/2. Its function is as follows. Catalyzes the transfer of a phosphate group to glutamate to form L-glutamate 5-phosphate. The polypeptide is Glutamate 5-kinase (Erwinia tasmaniensis (strain DSM 17950 / CFBP 7177 / CIP 109463 / NCPPB 4357 / Et1/99)).